The sequence spans 404 residues: Serine/threonine transporter SstT (404 aa).

The next 8 helical transmembrane spans lie at 17–37 (IGIG…LTGF), 39–59 (ILGK…VFAL), 75–95 (MTLI…VAVL), 138–158 (ALAT…GLAL), 179–199 (IVVW…FTTI), 212–232 (FLIL…NPLI), 287–307 (IPLG…VLTL), and 313–333 (FGIP…AVSA).

This sequence belongs to the dicarboxylate/amino acid:cation symporter (DAACS) (TC 2.A.23) family.

The protein localises to the cell membrane. It catalyses the reaction L-serine(in) + Na(+)(in) = L-serine(out) + Na(+)(out). The catalysed reaction is L-threonine(in) + Na(+)(in) = L-threonine(out) + Na(+)(out). In terms of biological role, involved in the import of serine and threonine into the cell, with the concomitant import of sodium (symport system). This Streptococcus pyogenes serotype M5 (strain Manfredo) protein is Serine/threonine transporter SstT.